Consider the following 438-residue polypeptide: 3-phosphoshikimate 1-carboxyvinyltransferase (438 aa).

3-phosphoshikimate-binding residues include Lys-26, Ser-27, and Arg-31. Lys-26 contributes to the phosphoenolpyruvate binding site. Gly-99 and Arg-127 together coordinate phosphoenolpyruvate. 6 residues coordinate 3-phosphoshikimate: Ser-170, Ser-171, Gln-172, Ser-199, Glu-314, and His-343. Gln-172 contacts phosphoenolpyruvate. Catalysis depends on Glu-314, which acts as the Proton acceptor. 3 residues coordinate phosphoenolpyruvate: Arg-347, Arg-388, and Lys-413.

It belongs to the EPSP synthase family. Monomer.

It is found in the cytoplasm. The catalysed reaction is 3-phosphoshikimate + phosphoenolpyruvate = 5-O-(1-carboxyvinyl)-3-phosphoshikimate + phosphate. It functions in the pathway metabolic intermediate biosynthesis; chorismate biosynthesis; chorismate from D-erythrose 4-phosphate and phosphoenolpyruvate: step 6/7. In terms of biological role, catalyzes the transfer of the enolpyruvyl moiety of phosphoenolpyruvate (PEP) to the 5-hydroxyl of shikimate-3-phosphate (S3P) to produce enolpyruvyl shikimate-3-phosphate and inorganic phosphate. The sequence is that of 3-phosphoshikimate 1-carboxyvinyltransferase from Mycobacterium sp. (strain JLS).